A 124-amino-acid polypeptide reads, in one-letter code: Protein MGF 110-4L (124 aa).

Residues 1-18 form the signal peptide; it reads MLVIFLGILGLLANQVLG. N-linked (GlcNAc...) asparagine; by host glycosylation is present at asparagine 64. A Prevents secretion from ER motif is present at residues 121–124; it reads KEDL.

It belongs to the asfivirus MGF 110 family.

It is found in the virion. Its subcellular location is the host endoplasmic reticulum-Golgi intermediate compartment. In terms of biological role, causes the redistribution of lumenal ER protein to an enlarged ERGIC compartment. This Ornithodoros (relapsing fever ticks) protein is Protein MGF 110-4L.